Reading from the N-terminus, the 116-residue chain is Large ribosomal subunit protein bL20c (116 aa).

Belongs to the bacterial ribosomal protein bL20 family.

The protein localises to the plastid. The protein resides in the chloroplast. Functionally, binds directly to 23S ribosomal RNA and is necessary for the in vitro assembly process of the 50S ribosomal subunit. It is not involved in the protein synthesizing functions of that subunit. The sequence is that of Large ribosomal subunit protein bL20c from Ipomoea purpurea (Common morning glory).